Reading from the N-terminus, the 221-residue chain is Vesicle-associated membrane protein 722 (221 aa).

Topologically, residues 1-196 (MAQQSLIYSF…MWFQNMKIKL (196 aa)) are cytoplasmic. Positions 10–114 (FVARGTVILV…SLNKEFGSKL (105 aa)) constitute a Longin domain. The region spanning 130–190 (KLAKVKAQVS…TQMRRKMWFQ (61 aa)) is the v-SNARE coiled-coil homology domain. Residues 197–217 (IVLAIIIALILIIILSICGGF) traverse the membrane as a helical; Anchor for type IV membrane protein segment. Residues 218 to 221 (NCGK) lie on the Vesicular side of the membrane.

The protein belongs to the synaptobrevin family. As to expression, highly expressed in stems and roots. Detected in flowers and leaves.

The protein localises to the cell membrane. It localises to the early endosome membrane. Involved in the targeting and/or fusion of transport vesicles to their target membrane. The polypeptide is Vesicle-associated membrane protein 722 (Arabidopsis thaliana (Mouse-ear cress)).